Consider the following 439-residue polypeptide: Chaperone SurA (439 aa).

The signal sequence occupies residues 1 to 27; sequence MRRISSRLSLVLFAALSCATALFPAHA. PpiC domains lie at 180–281 and 293–391; these read GEEF…KLLD and LEQT…QVEA.

Its subcellular location is the periplasm. It catalyses the reaction [protein]-peptidylproline (omega=180) = [protein]-peptidylproline (omega=0). In terms of biological role, chaperone involved in the correct folding and assembly of outer membrane proteins. Recognizes specific patterns of aromatic residues and the orientation of their side chains, which are found more frequently in integral outer membrane proteins. May act in both early periplasmic and late outer membrane-associated steps of protein maturation. The chain is Chaperone SurA from Aromatoleum aromaticum (strain DSM 19018 / LMG 30748 / EbN1) (Azoarcus sp. (strain EbN1)).